A 568-amino-acid chain; its full sequence is Chaperonin homolog Hsp-60, mitochondrial (568 aa).

It belongs to the chaperonin (HSP60) family.

It localises to the mitochondrion matrix. Functionally, implicated in mitochondrial protein import and macromolecular assembly. May facilitate the correct folding of imported proteins. May also prevent misfolding and promote the refolding and proper assembly of unfolded polypeptides generated under stress conditions in the mitochondrial matrix. The polypeptide is Chaperonin homolog Hsp-60, mitochondrial (hsp-60) (Caenorhabditis elegans).